We begin with the raw amino-acid sequence, 164 residues long: Transcription antitermination protein NusB (164 aa).

It belongs to the NusB family.

Its function is as follows. Involved in transcription antitermination. Required for transcription of ribosomal RNA (rRNA) genes. Binds specifically to the boxA antiterminator sequence of the ribosomal RNA (rrn) operons. This is Transcription antitermination protein NusB from Desulfovibrio desulfuricans (strain ATCC 27774 / DSM 6949 / MB).